The primary structure comprises 385 residues: Leucine aminopeptidase 1 (385 aa).

A signal peptide spans 1-19 (MKFPSFLSLGIAASTTALA). The propeptide occupies 20–87 (ALPDQKPIGD…FPRAFAKTAV (68 aa)). N-linked (GlcNAc...) asparagine glycosylation occurs at Asn177. The Zn(2+) site is built by His185 and Asp204. N-linked (GlcNAc...) asparagine glycosylation occurs at Asn229. Residues Glu243 and Asp270 each contribute to the Zn(2+) site. Cys319 and Cys323 are disulfide-bonded. His352 provides a ligand contact to Zn(2+).

This sequence belongs to the peptidase M28 family. M28E subfamily. As to quaternary structure, monomer. Zn(2+) serves as cofactor.

Its subcellular location is the secreted. Extracellular aminopeptidase that allows assimilation of proteinaceous substrates. In Blastomyces gilchristii (strain SLH14081) (Blastomyces dermatitidis), this protein is Leucine aminopeptidase 1 (LAP1).